The primary structure comprises 492 residues: 3-octaprenyl-4-hydroxybenzoate carboxy-lyase (492 aa).

N175 serves as a coordination point for Mn(2+). Residues 178–180, 192–194, and 197–198 each bind prenylated FMN; these read IYR, RWL, and RG. E241 provides a ligand contact to Mn(2+). D290 acts as the Proton donor in catalysis.

This sequence belongs to the UbiD family. Homohexamer. Prenylated FMN is required as a cofactor. The cofactor is Mn(2+).

It is found in the cell membrane. It catalyses the reaction a 4-hydroxy-3-(all-trans-polyprenyl)benzoate + H(+) = a 2-(all-trans-polyprenyl)phenol + CO2. It participates in cofactor biosynthesis; ubiquinone biosynthesis. In terms of biological role, catalyzes the decarboxylation of 3-octaprenyl-4-hydroxy benzoate to 2-octaprenylphenol, an intermediate step in ubiquinone biosynthesis. The sequence is that of 3-octaprenyl-4-hydroxybenzoate carboxy-lyase from Salmonella typhimurium (strain LT2 / SGSC1412 / ATCC 700720).